Here is a 502-residue protein sequence, read N- to C-terminus: MSIKPEEISSLIKQQIESFQSDVQVQDVGTVIRVGDGIALAHGLENVMAGELLEFSNGVMGMAQNLEENNIGIIILGPYTDIREGDEVKRTGRIMEVPVGEELLGRVVNPLGQPIDGLGPIATTKSRPIESPAPGVMDRKSVHEPLQTGIKSIDTMIPIGRGQRELIIGDRQTGKTAIAIDTILNQKDEDMICIYVAIGQKDSTVAGVVETLRQRGALDYTIVVSASASDPAPMLFLAPYAGVSMGEEFMYNGKHVLVIYDDLSKQASAYRELSLLLRRPPGREAFPGDVFYLHSRLLERAAKLSDAKGGGSITALPFIETQAGDVSAYIPTNVISITDGQIFLQSDLFYSGIRPAVNAGLSVSRVGGSAQIKAMKKVSGTLRLDLAAYRELEAFAQFGSDLDKATQAKLNRGQRTVEVLKQDLHNPLPVEKQVAIIYALTKGFMDDIPVEDVQRFESEFFTFLDHNKKDLLDHIRTTGNLPEDADFKAAIEEFKKGFSASK.

Residues 119–139 form a disordered region; it reads GPIATTKSRPIESPAPGVMDR. 169-176 is a binding site for ATP; it reads GDRQTGKT.

The protein belongs to the ATPase alpha/beta chains family. In terms of assembly, F-type ATPases have 2 components, CF(1) - the catalytic core - and CF(0) - the membrane proton channel. CF(1) has five subunits: alpha(3), beta(3), gamma(1), delta(1), epsilon(1). CF(0) has three main subunits: a(1), b(2) and c(9-12). The alpha and beta chains form an alternating ring which encloses part of the gamma chain. CF(1) is attached to CF(0) by a central stalk formed by the gamma and epsilon chains, while a peripheral stalk is formed by the delta and b chains.

The protein localises to the cell membrane. It carries out the reaction ATP + H2O + 4 H(+)(in) = ADP + phosphate + 5 H(+)(out). In terms of biological role, produces ATP from ADP in the presence of a proton gradient across the membrane. The alpha chain is a regulatory subunit. The protein is ATP synthase subunit alpha of Alkalihalophilus pseudofirmus (strain ATCC BAA-2126 / JCM 17055 / OF4) (Bacillus pseudofirmus).